Here is an 858-residue protein sequence, read N- to C-terminus: Coiled-coil and C2 domain-containing protein 1B (858 aa).

Disordered regions lie at residues 112–164, 180–199, 204–284, 329–352, and 470–533; these read VLGV…GASQ, AAAS…CERG, ESQL…ALLS, VDLS…APTA, and EKLA…SPSV. A compositionally biased stretch (acidic residues) spans 114–143; that stretch reads GVDEETEPLDGDEVADPGGSEEENGLEDTE. The span at 153 to 164 shows a compositional bias: low complexity; sequence ASAPAAQAGASQ. Residues 166–212 are a coiled coil; sequence LHALLEERIHNYREAAASAKEAGEAAKARRCERGLKTLESQLASVRR. Over residues 186 to 199 the composition is skewed to basic and acidic residues; that stretch reads EAGEAAKARRCERG. Serine 209 carries the phosphoserine modification. Low complexity predominate over residues 520-532; sequence PRASSSKESPSPS. Serine 593 carries the phosphoserine modification. Phosphothreonine is present on threonine 596. Residues 611-635 are a coiled coil; the sequence is RLSQKAEEVYAQLQKMLLEQQEKCL. The C2 domain occupies 676-815; the sequence is DPPTHHFELK…ENECEIREIV (140 aa).

The protein belongs to the CC2D1 family. As to quaternary structure, interacts with CHMP4B. As to expression, widely distributed in brain and peripheral tissues.

It localises to the nucleus. Functionally, transcription factor that binds specifically to the DRE (dual repressor element) and represses HTR1A gene transcription in neuronal cells. The chain is Coiled-coil and C2 domain-containing protein 1B (CC2D1B) from Homo sapiens (Human).